Here is a 223-residue protein sequence, read N- to C-terminus: Serine/threonine/tyrosine-interacting protein (223 aa).

One can recognise a Tyrosine-protein phosphatase domain in the interval 28 to 176; it reads EMQEILPGLF…LQEYEAIYLA (149 aa). An Interaction with FBXW7 motif is present at residues 76 to 78; that stretch reads FQQ. S184, S193, and S201 each carry phosphoserine. Residues 197–223 are disordered; the sequence is GTTGSLKRTHEEEDDFGTMQVATAQNG.

This sequence belongs to the protein-tyrosine phosphatase family. Non-receptor class subfamily. In terms of assembly, interacts with MAPK1; independently of MAPK1 phosphorylation status. Interacts with CARHSP1/Crhsp-24. Interacts (via FQQ motif) with FBXW7 isoforms 1 (via F-box domain) and 3 (via F-box domain); the interaction is direct and prevents FBXW7 interaction with SKP1, a component of the SCF(FBXW7) complex. Does not interact with FBXW7 isoform 2.

It localises to the nucleus. The protein localises to the cytoplasm. It is found in the cytosol. Functionally, catalytically inactive phosphatase. Acts as a nuclear anchor for MAPK1/MAPK3 (ERK1/ERK2). Modulates cell-fate decisions and cell migration by spatiotemporal regulation of MAPK1/MAPK3 (ERK1/ERK2). By binding to the F-box of FBXW7, prevents the assembly of FBXW7 into the SCF E3 ubiquitin-protein ligase complex, and thereby inhibits degradation of its substrates. Plays a role in spermatogenesis. This Homo sapiens (Human) protein is Serine/threonine/tyrosine-interacting protein.